The following is a 59-amino-acid chain: Small, acid-soluble spore protein H (59 aa).

Belongs to the SspH family.

Its subcellular location is the spore core. This is Small, acid-soluble spore protein H from Bacillus cereus (strain ZK / E33L).